A 90-amino-acid polypeptide reads, in one-letter code: Histone H1.M6.2 (90 aa).

The segment at 1-90 (MSDAAVPPKK…KAVKKAPKKK (90 aa)) is disordered. A compositionally biased stretch (basic residues) spans 11-90 (ASPKKAAAKK…KAVKKAPKKK (80 aa)).

The protein localises to the nucleus. It localises to the chromosome. The sequence is that of Histone H1.M6.2 from Trypanosoma cruzi.